A 130-amino-acid polypeptide reads, in one-letter code: MASEKVTALLEELKGLTLVEAAELAKEMEEVFGVSAAAPVMVAGVAAAGDAPAAAAEEQTEFTVILKGAPADKKIAIIKAVREVVAGLGLKEAKDLVEGAPKPVKEGVSKEEAEAAKAALAAAGAEIEIK.

This sequence belongs to the bacterial ribosomal protein bL12 family. As to quaternary structure, homodimer. Part of the ribosomal stalk of the 50S ribosomal subunit. Forms a multimeric L10(L12)X complex, where L10 forms an elongated spine to which 2 to 4 L12 dimers bind in a sequential fashion. Binds GTP-bound translation factors.

Forms part of the ribosomal stalk which helps the ribosome interact with GTP-bound translation factors. Is thus essential for accurate translation. The protein is Large ribosomal subunit protein bL12 of Herpetosiphon aurantiacus (strain ATCC 23779 / DSM 785 / 114-95).